The sequence spans 74 residues: uncharacterized protein (74 aa).

Disordered regions lie at residues M1–F26 and I46–Q74. A helical transmembrane segment spans residues V34–P50. Positions T47 to Q74 are enriched in low complexity.

It localises to the membrane. This is an uncharacterized protein from Dictyostelium discoideum (Social amoeba).